The primary structure comprises 354 residues: MSLWVDKYRPKSLNALSHNEELTNFLKSLSDQPRDLPHLLLYGPNGTGKKTRCMALLESIFGPGVYRLKIDVRQFVTASNRKLELNVVSSPYHLEITPSDMGNNDRIVIQELLKEVAQMEQVDFQDSKDGLAHRYKCVIINEANSLTKDAQAALRRTMEKYSKNIRLIMVCDSMSPIIAPIKSRCLLIRCPAPSDSEISTILSDVVTNERIQLETKDILKRIAQASNGNLRVSLLMLESMALNNELALKSSSPIIKPDWIIVIHKLTRKIVKERSVNSLIECRAVLYDLLAHCIPANIILKELTFSLLDVETLNTTNKSSIIEYSSVFDERLSLGNKAIFHLEGFIAKVMCCLD.

Residues V5, S17, 43-51, and R231 each bind ATP; that span reads GPNGTGKKT.

Belongs to the activator 1 small subunits family. Replication factor C (RFC) is a heteropentamer of subunits RFC1, RFC2, RFC3, RFC4 and RFC5 and forms a complex with POL30/PCNA in the presence of ATP. Component of the RAD24-RFC complex which consists of RAD24, RFC2, RFC3, RFC4 and RFC5 and associates with the checkpoint clamp DDC1:MEC3:RAD17 complex. Component of the ELG1-RFC complex which consists of ELG1, RFC2, RFC3, RFC4 and RFC5. Component of the CTF18-RFC complex, which consists of CTF18, CTF8, DCC1, RFC2, RFC3, RFC4 and RFC5. RFC5 interacts with ECO1.

Its subcellular location is the nucleus. Functionally, component of ATP-dependent clamp loader (RFC and RFC-like) complexes for DNA clamps, such as the POL30/PCNA homotrimer and the checkpoint clamp DDC1:MEC3:RAD17 complex. During a clamp loading circle, the RFC:clamp complex binds to DNA and the recognition of the double-stranded/single-stranded junction stimulates ATP hydrolysis by RFC. The complex presumably provides bipartite ATP sites in which one subunit supplies a catalytic site for hydrolysis of ATP bound to the neighboring subunit. Dissociation of RFC from the clamp leaves the clamp encircling DNA. Component of the replication factor C (RFC or activator 1) complex which loads POL30/PCNA and acts during elongation of primed DNA templates by DNA polymerase delta and epsilon. RFC has an essential but redundant activity in sister chromatid cohesion establishment. Component of the RFC-like complex CTF18-RFC which is required for efficient establishment of chromosome cohesion during S-phase and may load or unload POL30/PCNA. Component of the RFC-like RAD24-RFC complex which loads the checkpoint clamp DDC1:MEC3:RAD17 complex and is involved in DNA repair pathways. Component of the RFC-like ELG1-RFC complex which appears to have a role in DNA replication, replication fork re-start, recombination and repair. In Saccharomyces cerevisiae (strain ATCC 204508 / S288c) (Baker's yeast), this protein is Replication factor C subunit 5 (RFC5).